The following is a 463-amino-acid chain: Bifunctional protein HldE (463 aa).

The ribokinase stretch occupies residues 1-315 (MRKILVIGDL…LILNQTHPKI (315 aa)). Residue 191-194 (NRFE) coordinates ATP. Aspartate 260 is a catalytic residue. A cytidylyltransferase region spans residues 334–463 (FTNGCFDILH…IEKIKRAYND (130 aa)).

In the N-terminal section; belongs to the carbohydrate kinase PfkB family. It in the C-terminal section; belongs to the cytidylyltransferase family. As to quaternary structure, homodimer.

The enzyme catalyses D-glycero-beta-D-manno-heptose 7-phosphate + ATP = D-glycero-beta-D-manno-heptose 1,7-bisphosphate + ADP + H(+). The catalysed reaction is D-glycero-beta-D-manno-heptose 1-phosphate + ATP + H(+) = ADP-D-glycero-beta-D-manno-heptose + diphosphate. The protein operates within nucleotide-sugar biosynthesis; ADP-L-glycero-beta-D-manno-heptose biosynthesis; ADP-L-glycero-beta-D-manno-heptose from D-glycero-beta-D-manno-heptose 7-phosphate: step 1/4. It functions in the pathway nucleotide-sugar biosynthesis; ADP-L-glycero-beta-D-manno-heptose biosynthesis; ADP-L-glycero-beta-D-manno-heptose from D-glycero-beta-D-manno-heptose 7-phosphate: step 3/4. Functionally, catalyzes the phosphorylation of D-glycero-D-manno-heptose 7-phosphate at the C-1 position to selectively form D-glycero-beta-D-manno-heptose-1,7-bisphosphate. In terms of biological role, catalyzes the ADP transfer from ATP to D-glycero-beta-D-manno-heptose 1-phosphate, yielding ADP-D-glycero-beta-D-manno-heptose. In Helicobacter acinonychis (strain Sheeba), this protein is Bifunctional protein HldE.